The chain runs to 406 residues: Tyrosine--tRNA ligase (406 aa).

Tyrosine 35 serves as a coordination point for L-tyrosine. The short motif at 40 to 49 is the 'HIGH' region element; that stretch reads PTADSLHIGH. 2 residues coordinate L-tyrosine: tyrosine 168 and glutamine 172. The short motif at 228–232 is the 'KMSKS' region element; sequence KMGKT. ATP is bound at residue lysine 231. The S4 RNA-binding domain maps to 340 to 406; sequence CSVVELLVDI…KKNYNRIIIK (67 aa).

It belongs to the class-I aminoacyl-tRNA synthetase family. TyrS type 1 subfamily. As to quaternary structure, homodimer.

It localises to the cytoplasm. It carries out the reaction tRNA(Tyr) + L-tyrosine + ATP = L-tyrosyl-tRNA(Tyr) + AMP + diphosphate + H(+). Functionally, catalyzes the attachment of tyrosine to tRNA(Tyr) in a two-step reaction: tyrosine is first activated by ATP to form Tyr-AMP and then transferred to the acceptor end of tRNA(Tyr). The polypeptide is Tyrosine--tRNA ligase (Clostridium kluyveri (strain NBRC 12016)).